Here is a 238-residue protein sequence, read N- to C-terminus: Ribonuclease PH (238 aa).

Positions 66–88 (LPRSTHTRSDREAARGKQSGRTQ) are disordered. Phosphate is bound by residues R86 and 124–126 (GTR).

The protein belongs to the RNase PH family. In terms of assembly, homohexameric ring arranged as a trimer of dimers.

The catalysed reaction is tRNA(n+1) + phosphate = tRNA(n) + a ribonucleoside 5'-diphosphate. Its function is as follows. Phosphorolytic 3'-5' exoribonuclease that plays an important role in tRNA 3'-end maturation. Removes nucleotide residues following the 3'-CCA terminus of tRNAs; can also add nucleotides to the ends of RNA molecules by using nucleoside diphosphates as substrates, but this may not be physiologically important. Probably plays a role in initiation of 16S rRNA degradation (leading to ribosome degradation) during starvation. This is Ribonuclease PH from Ralstonia pickettii (strain 12J).